A 302-amino-acid polypeptide reads, in one-letter code: Ribosomal protein L11 methyltransferase (302 aa).

T155, G176, D198, and N239 together coordinate S-adenosyl-L-methionine.

This sequence belongs to the methyltransferase superfamily. PrmA family.

The protein resides in the cytoplasm. The catalysed reaction is L-lysyl-[protein] + 3 S-adenosyl-L-methionine = N(6),N(6),N(6)-trimethyl-L-lysyl-[protein] + 3 S-adenosyl-L-homocysteine + 3 H(+). Its function is as follows. Methylates ribosomal protein L11. The sequence is that of Ribosomal protein L11 methyltransferase from Caldicellulosiruptor saccharolyticus (strain ATCC 43494 / DSM 8903 / Tp8T 6331).